A 1698-amino-acid polypeptide reads, in one-letter code: MVGELRYREFRVPLGPGLHAYPDELIRQRVGHDGHPEYQIRWLILRRGDEGDGGSGQVDCKAEHILLWMSKDEIYANCHKMLGEDGQVIGPSQESAGEVGALDKSVLEEMETDVKSLIQRALRQLEECVGTIPPAPLLHTVHVLSAYASIEPLTGVFKDPRVLDLLMHMLSSPDYQIRWSAGRMIQALSSHDAGTRTQILLSLSQQEAIEKHLDFDSRCALLALFAQATLSEHPMSFEGIQLPQVPGRVLFSLVKRYLHVTSLLDQLNDSAAEPGAQNTSAPEELSGERGQLELEFSMAMGTLISELVQAMRWDQASDRPRSSARSPGSIFQPQLADVSPGLPAAQAQPSFRRSRRFRPRSEFASGNTYALYVRDTLQPGMRVRMLDDYEEISAGDEGEFRQSNNGVPPVQVFWESTGRTYWVHWHMLEILGFEEDIEDMVEADEYQGAVASRVLGRALPAWRWRPMTELYAVPYVLPEDEDTEECEHLTLAEWWELLFFIKKLDGPDHQEVLQILQENLDGEILDDEILAELAVPIELAQDLLLTLPQRLNDSALRDLINCHVYKKYGPEALAGNQAYPSLLEAQEDVLLLDAQAQAKDSEDAAKVEAKEPPSQSPNTPLQRLVEGYGPAGKILLDLEQALSSEGTQENKVKPLLLQLQRQPQPFLALMQSLDTPETNRTLHLTVLRILKQLVDFPEALLLPWHEAVDACMACLRSPNTDREVLQELIFFLHRLTSVSRDYAVVLNQLGARDAISKALEKHLGKLELAQELRDMVFKCEKHAHLYRKLITNILGGCIQMVLGQIEDHRRTHQPINIPFFDVFLRYLCQGSSVEVKEDKCWEKVEVSSNPHRASKLTDHNPKTYWESNGSAGSHYITLHMRRGILIRQLTLLVASEDSSYMPARVVVCGGDSTSSLHTELNSVNVMPSASRVILLENLTRFWPIIQIRIKRCQQGGIDTRIRGLEILGPKPTFWPVFREQLCRHTRLFYMVRAQAWSQDMAEDRRSLLHLSSRLNGALRQEQNFADRFLPDDEAAQALGKTCWEALVSPVVQNITSPDEDGISPLGWLLDQYLECQEAVFNPQSRGPAFFSRVRRLTHLLVHVEPCEAPPPVVATPRPKGRNRSHDWSSLATRGLPSSIMRNLTRCWRAVVEKQVNNFLTSSWRDDDFVPRYCEHFNILQNSSSELFGPRAAFLLALQNGCAGALLKLPFLKAAHVSEQFARHIDQQIQGSRIGGAQEMERLAQLQQCLQAVLIFSGLEIATTFEHYYQHYMADRLLGVVSSWLEGAVLEQIGPCFPNRLPQQMLQSLSTSKELQRQFHVYQLQQLDQELLKLEDTEKKIQVGLGASGKEHKSEKEEEAGAAAVVDVAEGEEEEEENEDLYYEGAMPEVSVLVLSRHSWPVASICHTLNPRTCLPSYLRGTLNRYSNFYNKSQSHPALERGSQRRLQWTWLGWAELQFGNQTLHVSTVQMWLLLYLNDLKAVSVESLLAFSGLSADMLNQAIGPLTSSRGPLDLHEQKDIPGGVLKIRDGSKEPRSRWDIVRLIPPQTYLQAEGEDGQNLEKRRNLLNCLIVRILKAHGDEGLHIDQLVCLVLEAWQKGPCPPRGLVSSLGKGSACSSTDVLSCILHLLGKGTLRRHDDRPQVLSYAVPVTVMEPHTESLNPGSSGPNPPLTFHTLQIRSRGVPYASCTATQSFSTFR.

Residues 315–357 (QASDRPRSSARSPGSIFQPQLADVSPGLPAAQAQPSFRRSRRF) form a disordered region. Ser339 is modified (phosphoserine). Residues 360–433 (RSEFASGNTY…HWHMLEILGF (74 aa)) enclose the CPH domain. Residues 601 to 611 (SEDAAKVEAKE) show a composition bias toward basic and acidic residues. The disordered stretch occupies residues 601 to 623 (SEDAAKVEAKEPPSQSPNTPLQR). A DOC domain is found at 814–993 (PINIPFFDVF…HTRLFYMVRA (180 aa)). The segment at 1345–1370 (GASGKEHKSEKEEEAGAAAVVDVAEG) is disordered. Residue Lys1576 forms a Glycyl lysine isopeptide (Lys-Gly) (interchain with G-Cter in NEDD8) linkage.

Belongs to the cullin family. Component of the 3M complex, composed of core components CUL7, CCDC8 and OBSL1. Component of the Cul7-RING(FBXW8) complex consisting of CUL7, RBX1, SKP1 and FBXW8. Within the Cul7-RING(FBXW8) complex interacts with FBXW8 and RBX1, but not with SKP1. Interacts with CUL1 (via the C-terminal domain); the interaction seems to be mediated by FBXW8; it is likely specific to FBXW8, but not other F-box proteins. Interacts (via the CPH domain) with p53/TP53; the interaction preferentially involves tetrameric and dimeric p53/TP53; this interaction recruits p53/TP53 for ubiquitination by neddylated CUL1-RBX1. The CUL7-CUL9 heterodimer seems to interact specifically with p53/TP53. Interacts with FBXW8; interaction is mutually exclusive of binding to CUL9 or p53/TP53. Interacts with CUL9; leading to inhibited CUL9 activity. Interacts with OBSL1. Interacts (as part of the 3M complex) with HDAC4 and HDAC5; it is negatively regulated by ANKRA2. In terms of assembly, (Microbial infection) Interacts with SV40 Large T antigen; this interaction seems to inhibit CUL7. Post-translationally, according to a report, may not be neddylated despite the conserved consensus site for neddylation at Lys-1576. Structural study of the Cul7-RING(FBXW8) reveals that both CUL7 and RBX1 are in orientations that are incompatible with neddylation. In terms of tissue distribution, highly expressed in fetal kidney and adult skeletal muscle. Also abundant in fetal brain, as well as in adult pancreas, kidney, placenta and heart. Detected in trophoblasts, lymphoblasts, osteoblasts, chondrocytes and skin fibroblasts.

The protein resides in the cytoplasm. It localises to the cytoskeleton. The protein localises to the microtubule organizing center. Its subcellular location is the centrosome. It is found in the perinuclear region. The protein resides in the golgi apparatus. The protein operates within protein modification; protein ubiquitination. Functionally, core component of the 3M and Cul7-RING(FBXW8) complexes, which mediate the ubiquitination and subsequent proteasomal degradation of target proteins. Core component of the 3M complex, a complex required to regulate microtubule dynamics and genome integrity. It is unclear how the 3M complex regulates microtubules, it could act by controlling the level of a microtubule stabilizer. The Cul7-RING(FBXW8) complex alone lacks ubiquitination activity and does not promote polyubiquitination and proteasomal degradation of p53/TP53. However it mediates recruitment of p53/TP53 for ubiquitination by neddylated CUL1-RBX1. Interaction with CUL9 is required to inhibit CUL9 activity and ubiquitination of BIRC5. The Cul7-RING(FBXW8) complex also mediates ubiquitination and consequent degradation of target proteins such as GORASP1, IRS1 and MAP4K1/HPK1. Ubiquitination of GORASP1 regulates Golgi morphogenesis and dendrite patterning in brain. Mediates ubiquitination and degradation of IRS1 in a mTOR-dependent manner: the Cul7-RING(FBXW8) complex recognizes and binds IRS1 previously phosphorylated by S6 kinase (RPS6KB1 or RPS6KB2). The Cul7-RING(FBXW8) complex also mediates ubiquitination of MAP4K1/HPK1: recognizes and binds autophosphorylated MAP4K1/HPK1, leading to its degradation, thereby affecting cell proliferation and differentiation. Acts as a regulator in trophoblast cell epithelial-mesenchymal transition and placental development. While the Cul7-RING(FBXW8) and the 3M complexes are associated and involved in common processes, CUL7 and the Cul7-RING(FBXW8) complex may have additional functions. Probably plays a role in the degradation of proteins involved in endothelial proliferation and/or differentiation. The chain is Cullin-7 (CUL7) from Homo sapiens (Human).